Consider the following 93-residue polypeptide: Cytochrome c (93 aa).

Over residues 1-13 (AALPPGDAAAAQG) the composition is skewed to low complexity. Residues 1–21 (AALPPGDAAAAQGGSNGVGPN) are disordered. Methionine 70 serves as a coordination point for heme c.

The protein belongs to the cytochrome c family. Binds 1 heme c group covalently per subunit.

It is found in the mitochondrion intermembrane space. Its function is as follows. Electron carrier protein. The oxidized form of the cytochrome c heme group can accept an electron from the heme group of the cytochrome c1 subunit of cytochrome reductase. Cytochrome c then transfers this electron to the cytochrome oxidase complex, the final protein carrier in the mitochondrial electron-transport chain. The sequence is that of Cytochrome c from Trypanosoma brucei brucei.